The primary structure comprises 412 residues: Alanyl-tRNA editing protein Aarsd1 (412 aa).

Zn(2+) contacts are provided by H109 and H113. S174 bears the Phosphoserine mark. Zn(2+) is bound by residues C209 and H213.

This sequence belongs to the class-II aminoacyl-tRNA synthetase family. Alax-L subfamily. It depends on Zn(2+) as a cofactor.

The protein resides in the cytoplasm. Its function is as follows. Functions in trans to edit the amino acid moiety from incorrectly charged tRNA(Ala). This is Alanyl-tRNA editing protein Aarsd1 (Aarsd1) from Rattus norvegicus (Rat).